Here is a 327-residue protein sequence, read N- to C-terminus: DNA-directed RNA polymerase subunit alpha (327 aa).

The alpha N-terminal domain (alpha-NTD) stretch occupies residues 1 to 233; sequence MQNVLKSFLT…HQLAAFVDLK (233 aa). The tract at residues 247-327 is alpha C-terminal domain (alpha-CTD); it reads VNPLLLRPVE…GWPPADLTDQ (81 aa).

This sequence belongs to the RNA polymerase alpha chain family. Homodimer. The RNAP catalytic core consists of 2 alpha, 1 beta, 1 beta' and 1 omega subunit. When a sigma factor is associated with the core the holoenzyme is formed, which can initiate transcription.

The enzyme catalyses RNA(n) + a ribonucleoside 5'-triphosphate = RNA(n+1) + diphosphate. Its function is as follows. DNA-dependent RNA polymerase catalyzes the transcription of DNA into RNA using the four ribonucleoside triphosphates as substrates. The polypeptide is DNA-directed RNA polymerase subunit alpha (Coxiella burnetii (strain CbuK_Q154) (Coxiella burnetii (strain Q154))).